The following is a 314-amino-acid chain: DNA-directed RNA polymerase subunit alpha (314 aa).

The interval 1–228 (MIEIEKPRIE…EHLNIFVGLT (228 aa)) is alpha N-terminal domain (alpha-NTD). The tract at residues 246–314 (EKVLEMSIEE…DLGLGLRKED (69 aa)) is alpha C-terminal domain (alpha-CTD).

Belongs to the RNA polymerase alpha chain family. In terms of assembly, homodimer. The RNAP catalytic core consists of 2 alpha, 1 beta, 1 beta' and 1 omega subunit. When a sigma factor is associated with the core the holoenzyme is formed, which can initiate transcription.

The enzyme catalyses RNA(n) + a ribonucleoside 5'-triphosphate = RNA(n+1) + diphosphate. In terms of biological role, DNA-dependent RNA polymerase catalyzes the transcription of DNA into RNA using the four ribonucleoside triphosphates as substrates. The polypeptide is DNA-directed RNA polymerase subunit alpha (Staphylococcus aureus (strain Mu3 / ATCC 700698)).